We begin with the raw amino-acid sequence, 459 residues long: ATP synthase subunit beta (459 aa).

149–156 (GGAGVGKT) provides a ligand contact to ATP.

It belongs to the ATPase alpha/beta chains family. F-type ATPases have 2 components, CF(1) - the catalytic core - and CF(0) - the membrane proton channel. CF(1) has five subunits: alpha(3), beta(3), gamma(1), delta(1), epsilon(1). CF(0) has three main subunits: a(1), b(2) and c(9-12). The alpha and beta chains form an alternating ring which encloses part of the gamma chain. CF(1) is attached to CF(0) by a central stalk formed by the gamma and epsilon chains, while a peripheral stalk is formed by the delta and b chains.

It is found in the cell inner membrane. It catalyses the reaction ATP + H2O + 4 H(+)(in) = ADP + phosphate + 5 H(+)(out). Its function is as follows. Produces ATP from ADP in the presence of a proton gradient across the membrane. The catalytic sites are hosted primarily by the beta subunits. This chain is ATP synthase subunit beta, found in Pseudomonas savastanoi pv. phaseolicola (strain 1448A / Race 6) (Pseudomonas syringae pv. phaseolicola (strain 1448A / Race 6)).